Here is a 933-residue protein sequence, read N- to C-terminus: MTELKAKGPRAPHVAGGPPSPEVGSPLLCRPAAGPFPGSQTSDTLPEVSAIPISLDGLLFPRPCQGQDPSDEKTQDQQSLSDVEGAYSRAEATRGAGGSSSSPPEKDSGLLDSVLDTLLAPSGPGQSQPSPPACEVTSSWCLFGPELPEDPPAAPATQRVLSPLMSRSGCKVGDSSGTAAAHKVLPRGLSPARQLLLPASESPHWSGAPVKPSPQAAAVEVEEEDGSESEESAGPLLKGKPRALGGAAAGGGAAAVPPGAAAGGVALVPKEDSRFSAPRVALVEQDAPMAPGRSPLATTVMDFIHVPILPLNHALLAARTRQLLEDESYDGGAGAASAFAPPRSSPCASSTPVAVGDFPDCAYPPDAEPKDDAYPLYSDFQPPALKIKEEEEGAEASARSPRSYLVAGANPAAFPDFPLGPPPPLPPRATPSRPGEAAVTAAPASASVSSASSSGSTLECILYKAEGAPPQQGPFAPPPCKAPGASGCLLPRDGLPSTSASAAAAGAAPALYPALGLNGLPQLGYQAAVLKEGLPQVYPPYLNYLRPDSEASQSPQYSFESLPQKICLICGDEASGCHYGVLTCGSCKVFFKRAMEGQHNYLCAGRNDCIVDKIRRKNCPACRLRKCCQAGMVLGGRKFKKFNKVRVVRALDAVALPQPVGVPNESQALSQRFTFSPGQDIQLIPPLINLLMSIEPDVIYAGHDNTKPDTSSSLLTSLNQLGERQLLSVVKWSKSLPGFRNLHIDDQITLIQYSWMSLMVFGLGWRSYKHVSGQMLYFAPDLILNEQRMKESSFYSLCLTMWQIPQEFVKLQVSQEEFLCMKVLLLLNTIPLEGLRSQTQFEEMRSSYIRELIKAIGLRQKGVVSSSQRFYQLTKLLDNLHDLVKQLHLYCLNTFIQSRALSVEFPEMMSEVIAAQLPKILAGMVKPLLFHKK.

The disordered stretch occupies residues Met-1–Thr-157. The AF3; mediates transcriptional activation (in isoform B) stretch occupies residues Met-1 to Leu-164. The segment at Met-1–Ile-566 is modulating, Pro-Rich. Residue Lys-7 forms a Glycyl lysine isopeptide (Lys-Gly) (interchain with G-Cter in SUMO) linkage. Position 20 is a phosphoserine (Ser-20). Positions Leu-55 to Leu-59 match the LXXL motif 1 motif. 2 positions are modified to phosphoserine: Ser-81 and Ser-102. The short motif at Leu-115–Leu-119 is the LXXL motif 2 element. A phosphoserine mark is found at Ser-130 and Ser-162. Residues Met-165–His-305 form a mediates transcriptional transrepression (in isoform A) region. Residues Lys-183–Arg-187 carry the Nuclear localization signal motif. A phosphoserine mark is found at Ser-190 and Ser-213. The segment at Leu-195–Pro-241 is disordered. A compositionally biased stretch (acidic residues) spans Glu-220–Glu-231. The span at Ser-232–Pro-241 shows a compositional bias: low complexity. Phosphoserine; by MAPK1 is present on Ser-294. Residues Gly-331–Thr-351 are disordered. The span at Ala-335–Ser-350 shows a compositional bias: low complexity. Ser-345 carries the phosphoserine; by MAPK modification. Residue Lys-388 forms a Glycyl lysine isopeptide (Lys-Gly) (interchain with G-Cter in SUMO); alternate linkage. Residue Lys-388 forms a Glycyl lysine isopeptide (Lys-Gly) (interchain with G-Cter in ubiquitin); alternate linkage. Ser-400 bears the Phosphoserine; by CDK2 mark. A disordered region spans residues Pro-415–Ser-452. A compositionally biased stretch (pro residues) spans Pro-418 to Ala-429. The segment covering Thr-430–Ser-452 has biased composition (low complexity). The interval Ser-456–Arg-546 is AF1; mediates transcriptional activation. Lys-531 participates in a covalent cross-link: Glycyl lysine isopeptide (Lys-Gly) (interchain with G-Cter in SUMO). NR C4-type zinc fingers lie at residues Cys-567 to Cys-587 and Cys-603 to Cys-627. The nuclear receptor DNA-binding region spans Cys-567–Phe-639. Residue Ser-676 is modified to Phosphoserine. An NR LBD domain is found at Gln-679 to Ile-913. Positions Leu-687–Lys-933 are AF2; mediates transcriptional activation. Arg-766 lines the progesterone pocket.

It belongs to the nuclear hormone receptor family. NR3 subfamily. Interacts with SMARD1 and UNC45A. Interacts with CUEDC2; the interaction promotes ubiquitination, decreases sumoylation, and represses transcriptional activity. Interacts with PIAS3; the interaction promotes sumoylation of PR in a hormone-dependent manner, inhibits DNA-binding, and alters nuclear export. Interacts with SP1; the interaction requires ligand-induced phosphorylation on Ser-345 by ERK1/2 MAPK. Interacts with PRMT2. Isoform A interacts with NCOR2. Isoform B (but not isoform A) interacts with NCOA2 and NCOA1. Isoform B (but not isoform A) interacts with KLF9. Interacts with GTF2B. Phosphorylated on multiple serine sites. Several of these sites are hormone-dependent. Phosphorylation on Ser-294 occurs preferentially on isoform B, is highly hormone-dependent and modulates ubiquitination and sumoylation on Lys-388. Phosphorylation on Ser-102 and Ser-345 also requires induction by hormone. Basal phosphorylation on Ser-81, Ser-162, Ser-190 and Ser-400 is increased in response to progesterone and can be phosphorylated in vitro by the CDK2-A1 complex. Increased levels of phosphorylation on Ser-400 also in the presence of EGF, heregulin, IGF, PMA and FBS. Phosphorylation at this site by CDK2 is ligand-independent, and increases nuclear translocation and transcriptional activity. Phosphorylation at Ser-162 and Ser-294, but not at Ser-190, is impaired during the G(2)/M phase of the cell cycle. Phosphorylation on Ser-345 by ERK1/2 MAPK is required for interaction with SP1. In terms of processing, sumoylation is hormone-dependent and represses transcriptional activity. Sumoylation on all three sites is enhanced by PIAS3. Desumoylated by SENP1. Sumoylation on Lys-388, the main site of sumoylation, is repressed by ubiquitination on the same site, and modulated by phosphorylation at Ser-294. Post-translationally, ubiquitination is hormone-dependent and represses sumoylation on the same site. Promoted by MAPK-mediated phosphorylation on Ser-294. Ubiquitinated by UBR5, leading to its degradation: UBR5 specifically recognizes and binds ligand-bound PGR when it is not associated with coactivators (NCOAs). In presence of NCOAs, the UBR5-degron is not accessible, preventing its ubiquitination and degradation. Palmitoylated by ZDHHC7 and ZDHHC21. Palmitoylation is required for plasma membrane targeting and for rapid intracellular signaling via ERK and AKT kinases and cAMP generation. As to expression, in reproductive tissues the expression of isoform A and isoform B varies as a consequence of developmental and hormonal status. Isoform A and isoform B are expressed in comparable levels in uterine glandular epithelium during the proliferative phase of the menstrual cycle. Expression of isoform B but not of isoform A persists in the glands during mid-secretory phase. In the stroma, isoform A is the predominant form throughout the cycle. Heterogeneous isoform expression between the glands of the endometrium basalis and functionalis is implying region-specific responses to hormonal stimuli.

The protein localises to the nucleus. Its subcellular location is the cytoplasm. It is found in the mitochondrion outer membrane. Functionally, the steroid hormones and their receptors are involved in the regulation of eukaryotic gene expression and affect cellular proliferation and differentiation in target tissues. Depending on the isoform, progesterone receptor functions as a transcriptional activator or repressor. Ligand-dependent transdominant repressor of steroid hormone receptor transcriptional activity including repression of its isoform B, MR and ER. Transrepressional activity may involve recruitment of corepressor NCOR2. In terms of biological role, transcriptional activator of several progesteron-dependent promoters in a variety of cell types. Involved in activation of SRC-dependent MAPK signaling on hormone stimulation. Its function is as follows. Increases mitochondrial membrane potential and cellular respiration upon stimulation by progesterone. The chain is Progesterone receptor (PGR) from Homo sapiens (Human).